The primary structure comprises 123 residues: Large ribosomal subunit protein bL19 (123 aa).

Belongs to the bacterial ribosomal protein bL19 family.

This protein is located at the 30S-50S ribosomal subunit interface and may play a role in the structure and function of the aminoacyl-tRNA binding site. The chain is Large ribosomal subunit protein bL19 from Laribacter hongkongensis (strain HLHK9).